A 111-amino-acid chain; its full sequence is MASLLYLILFLLFVCISYYFTYYPTNKLQAAVMETDRENAIIRQRNDEIPTRTLDTAIFTDASTVASAQIHLYYNSNIGKIIMSLNGKKHTFNLYDDNDIRTLLPILLLSK.

The chain crosses the membrane as a helical; Signal-anchor span at residues 1-21; sequence MASLLYLILFLLFVCISYYFT. Over 22 to 111 the chain is Virion surface; it reads YYPTNKLQAA…TLLPILLLSK (90 aa).

The protein belongs to the orthopoxvirus OPG086 family. Interacts with OPG099/L5. Component of the entry fusion complex (EFC) composed of OPG053, OPG076, OPG086, OPG094, OPG095, OPG099, OPG107, OPG143, OPG104, OPG147 and OPG155. Except for OPG095 and OPG053, each of the EFC proteins is required for assembly or stability of the complex. Unglycosylated because produced in viral factories instead of the classic ER -Golgi route.

The protein localises to the virion membrane. Its function is as follows. Component of the entry fusion complex (EFC), which consists of 11 proteins. During cell infection, this complex mediates entry of the virion core into the host cytoplasm by a two-step mechanism consisting of lipid mixing of the viral and cellular membranes and subsequent pore formation. This chain is Entry-fusion complex protein OPG086 (OPG086), found in Vaccinia virus (strain Copenhagen) (VACV).